The following is a 444-amino-acid chain: Phosphoglucosamine mutase (444 aa).

Residue Ser-102 is the Phosphoserine intermediate of the active site. Residues Ser-102, Asp-241, Asp-243, and Asp-245 each contribute to the Mg(2+) site. Ser-102 carries the post-translational modification Phosphoserine.

It belongs to the phosphohexose mutase family. Mg(2+) is required as a cofactor. In terms of processing, activated by phosphorylation.

The catalysed reaction is alpha-D-glucosamine 1-phosphate = D-glucosamine 6-phosphate. Its function is as follows. Catalyzes the conversion of glucosamine-6-phosphate to glucosamine-1-phosphate. The chain is Phosphoglucosamine mutase from Acidovorax sp. (strain JS42).